The primary structure comprises 168 residues: Crossover junction endodeoxyribonuclease RuvC (168 aa).

Residues D7, E66, and D138 contribute to the active site. Positions 7, 66, and 138 each coordinate Mg(2+).

Belongs to the RuvC family. Homodimer which binds Holliday junction (HJ) DNA. The HJ becomes 2-fold symmetrical on binding to RuvC with unstacked arms; it has a different conformation from HJ DNA in complex with RuvA. In the full resolvosome a probable DNA-RuvA(4)-RuvB(12)-RuvC(2) complex forms which resolves the HJ. Requires Mg(2+) as cofactor.

It localises to the cytoplasm. The enzyme catalyses Endonucleolytic cleavage at a junction such as a reciprocal single-stranded crossover between two homologous DNA duplexes (Holliday junction).. Its function is as follows. The RuvA-RuvB-RuvC complex processes Holliday junction (HJ) DNA during genetic recombination and DNA repair. Endonuclease that resolves HJ intermediates. Cleaves cruciform DNA by making single-stranded nicks across the HJ at symmetrical positions within the homologous arms, yielding a 5'-phosphate and a 3'-hydroxyl group; requires a central core of homology in the junction. The consensus cleavage sequence is 5'-(A/T)TT(C/G)-3'. Cleavage occurs on the 3'-side of the TT dinucleotide at the point of strand exchange. HJ branch migration catalyzed by RuvA-RuvB allows RuvC to scan DNA until it finds its consensus sequence, where it cleaves and resolves the cruciform DNA. This chain is Crossover junction endodeoxyribonuclease RuvC, found in Cereibacter sphaeroides (strain ATCC 17023 / DSM 158 / JCM 6121 / CCUG 31486 / LMG 2827 / NBRC 12203 / NCIMB 8253 / ATH 2.4.1.) (Rhodobacter sphaeroides).